A 139-amino-acid polypeptide reads, in one-letter code: MNKHALLNADMNYLAATLGHTDEVTICDAGLPIPAQVKRIDLALTHGVPSFIATVKVWLATSQIEGIVLAQEFADVSPECHQALLAEIEAEQQATGRTFSVEYISHEAFKQRTGHSRAVIRTGECTPYANVIFKTGVVF.

H20 (proton donor) is an active-site residue. Residues D28, H106, and 128–130 (YAN) each bind substrate.

It belongs to the RbsD / FucU family. RbsD subfamily. Homodecamer.

The protein resides in the cytoplasm. The enzyme catalyses beta-D-ribopyranose = beta-D-ribofuranose. It participates in carbohydrate metabolism; D-ribose degradation; D-ribose 5-phosphate from beta-D-ribopyranose: step 1/2. Functionally, catalyzes the interconversion of beta-pyran and beta-furan forms of D-ribose. This Shewanella pealeana (strain ATCC 700345 / ANG-SQ1) protein is D-ribose pyranase.